The sequence spans 121 residues: Large ribosomal subunit protein uL14 (121 aa).

This sequence belongs to the universal ribosomal protein uL14 family. Part of the 50S ribosomal subunit. Forms a cluster with proteins L3 and L19. In the 70S ribosome, L14 and L19 interact and together make contacts with the 16S rRNA in bridges B5 and B8.

Binds to 23S rRNA. Forms part of two intersubunit bridges in the 70S ribosome. The polypeptide is Large ribosomal subunit protein uL14 (Prochlorococcus marinus (strain NATL1A)).